We begin with the raw amino-acid sequence, 399 residues long: Elongation factor Tu (399 aa).

The tr-type G domain maps to 10-204 (KPHVNIGTIG…AVDASIPEPE (195 aa)). The G1 stretch occupies residues 19–26 (GHVDHGKT). 19 to 26 (GHVDHGKT) contributes to the GTP binding site. Residue Thr-26 participates in Mg(2+) binding. Residues 60 to 64 (GITIN) are G2. Residues 81–84 (DCPG) form a G3 region. GTP contacts are provided by residues 81-85 (DCPGH) and 136-139 (NKCD). Positions 136 to 139 (NKCD) are G4. Residues 174–176 (SGL) form a G5 region.

This sequence belongs to the TRAFAC class translation factor GTPase superfamily. Classic translation factor GTPase family. EF-Tu/EF-1A subfamily. As to quaternary structure, monomer.

It localises to the cytoplasm. It carries out the reaction GTP + H2O = GDP + phosphate + H(+). Functionally, GTP hydrolase that promotes the GTP-dependent binding of aminoacyl-tRNA to the A-site of ribosomes during protein biosynthesis. This Prochlorococcus marinus (strain NATL1A) protein is Elongation factor Tu.